The chain runs to 581 residues: Moesin/ezrin/radixin homolog 1 (581 aa).

Positions 8–298 (MNVRVTTMDA…GNHELYMRRR (291 aa)) constitute an FERM domain. The tract at residues 452 to 519 (QVAKGSRAAA…EERRTLAERN (68 aa)) is disordered. Positions 459–469 (AAAALQAATTT) are enriched in low complexity. Acidic residues predominate over residues 477–486 (EEEENEEELI). Basic and acidic residues predominate over residues 495–519 (FSKDFDTDEHIKDPVEERRTLAERN). Thr-562 bears the Phosphothreonine mark.

As to quaternary structure, interacts with cytoskeletal actin.

The protein resides in the cell junction. The protein localises to the adherens junction. It localises to the cell projection. Its subcellular location is the microvillus. It is found in the rhabdomere. The protein resides in the cell membrane. The protein localises to the cytoplasm. It localises to the cytoskeleton. Its function is as follows. Involved in connections of major cytoskeletal structures to the plasma membrane. In Anopheles gambiae (African malaria mosquito), this protein is Moesin/ezrin/radixin homolog 1.